Reading from the N-terminus, the 370-residue chain is Putative 8-amino-7-oxononanoate synthase (370 aa).

Position 20 (R20) interacts with substrate. A pyridoxal 5'-phosphate-binding site is contributed by 95 to 96; the sequence is GY. Substrate is bound at residue H120. Pyridoxal 5'-phosphate contacts are provided by residues S167, 192-195, and 223-226; these read DDAH and TLSK. K226 bears the N6-(pyridoxal phosphate)lysine mark. Substrate is bound at residue T337.

This sequence belongs to the class-II pyridoxal-phosphate-dependent aminotransferase family. BioF subfamily. Homodimer. It depends on pyridoxal 5'-phosphate as a cofactor.

It carries out the reaction 6-carboxyhexanoyl-[ACP] + L-alanine + H(+) = (8S)-8-amino-7-oxononanoate + holo-[ACP] + CO2. It participates in cofactor biosynthesis; biotin biosynthesis. Catalyzes the decarboxylative condensation of pimeloyl-[acyl-carrier protein] and L-alanine to produce 8-amino-7-oxononanoate (AON), [acyl-carrier protein], and carbon dioxide. The polypeptide is Putative 8-amino-7-oxononanoate synthase (bioF) (Methanococcus vannielii (strain ATCC 35089 / DSM 1224 / JCM 13029 / OCM 148 / SB)).